Reading from the N-terminus, the 93-residue chain is Small ribosomal subunit protein bS20 (93 aa).

Belongs to the bacterial ribosomal protein bS20 family.

In terms of biological role, binds directly to 16S ribosomal RNA. The chain is Small ribosomal subunit protein bS20 from Hydrogenobaculum sp. (strain Y04AAS1).